The following is a 656-amino-acid chain: Nexilin (656 aa).

Disordered stretches follow at residues 1–131 (MNDV…IEQD), 165–198 (RAAA…EEEC), and 215–284 (TEAK…VFKE). Over residues 11–26 (LLSSSKPVPKSYVPKL) the composition is skewed to low complexity. The segment covering 27–78 (GKGDVKDKFEAMQRAREERNQRRSRDEKQRRKEQYIREREWNRRKQEIKDML) has biased composition (basic and acidic residues). Position 80 is a phosphoserine (Ser-80). 3 stretches are compositionally biased toward basic and acidic residues: residues 103–131 (GKFD…IEQD), 169–198 (NRKD…EEEC), and 216–269 (EAKK…RNMV). Ser-221, Ser-330, Ser-337, and Ser-345 each carry phosphoserine. A Phosphothreonine modification is found at Thr-350. 2 disordered regions span residues 468-492 (NFHE…HKVN) and 529-564 (AALQ…APWF). Phosphoserine occurs at positions 544 and 549. Thr-551 is modified (phosphothreonine). Positions 562 to 650 (PWFKKPLRNT…GSAASTCILT (89 aa)) constitute an Ig-like domain.

As to quaternary structure, interacts with F-actin. In terms of tissue distribution, expressed in brain, testis, spleen and fibroblasts (at protein level). Not detected in liver, kidney or epithelial cells (at protein level).

It is found in the cytoplasm. Its subcellular location is the cytoskeleton. The protein resides in the cell junction. The protein localises to the adherens junction. It localises to the myofibril. It is found in the sarcomere. Its subcellular location is the z line. Its function is as follows. Involved in regulating cell migration through association with the actin cytoskeleton. Has an essential role in the maintenance of Z line and sarcomere integrity. In Rattus norvegicus (Rat), this protein is Nexilin.